A 157-amino-acid polypeptide reads, in one-letter code: Histidine-containing phosphotransfer protein 5 (157 aa).

N-acetylmethionine is present on Met-1. Residues 41 to 148 (TPDFVAEVVS…NLEKQILQAG (108 aa)) form the HPt domain. His-83 carries the phosphohistidine modification.

Interacts with the B-type response regulators ARR1 and ARR2. Binds to AHK2, AHK3, AHK4 and AHK5. Post-translationally, two-component system major event consists of a His-to-Asp phosphorelay between a sensor histidine kinase (HK) and a response regulator (RR). In plants, the His-to-Asp phosphorelay involves an additional intermediate named Histidine-containing phosphotransfer protein (HPt). This multistep phosphorelay consists of a His-Asp-His-Asp sequential transfer of a phosphate group between first a His and an Asp of the HK protein, followed by the transfer to a conserved His of the HPt protein and finally the transfer to an Asp in the receiver domain of the RR protein. In terms of tissue distribution, expressed in the whole plant.

It localises to the cytoplasm. Its subcellular location is the cytosol. It is found in the nucleus. Functionally, functions as a two-component phosphorelay mediator between cytokinin sensor histidine kinases and response regulators (B-type ARRs). Plays an important role in propagating cytokinin signal transduction through the multistep His-to-Asp phosphorelay. In Arabidopsis thaliana (Mouse-ear cress), this protein is Histidine-containing phosphotransfer protein 5 (AHP5).